Reading from the N-terminus, the 465-residue chain is ATP synthase subunit beta 2 (465 aa).

148–155 lines the ATP pocket; the sequence is GGAGVGKT.

It belongs to the ATPase alpha/beta chains family. In terms of assembly, F-type ATPases have 2 components, CF(1) - the catalytic core - and CF(0) - the membrane proton channel. CF(1) has five subunits: alpha(3), beta(3), gamma(1), delta(1), epsilon(1). CF(0) has three main subunits: a(1), b(2) and c(9-12). The alpha and beta chains form an alternating ring which encloses part of the gamma chain. CF(1) is attached to CF(0) by a central stalk formed by the gamma and epsilon chains, while a peripheral stalk is formed by the delta and b chains.

The protein localises to the cell inner membrane. The enzyme catalyses ATP + H2O + 4 H(+)(in) = ADP + phosphate + 5 H(+)(out). Produces ATP from ADP in the presence of a proton gradient across the membrane. The catalytic sites are hosted primarily by the beta subunits. The protein is ATP synthase subunit beta 2 of Psychromonas ingrahamii (strain DSM 17664 / CCUG 51855 / 37).